The following is a 567-amino-acid chain: MQNSGRDLWQNQSGYMSSLQQGLNKSNMVGASTSHGKTPMLMANNDVFTIAPYRTRKDNARVSVLDKYEIIGYIAAGTYGKVYKAKSRQSSKSSSSTGSDSLAQDTKPTTEFSNTSSLQNAGTYGDMMGAHGPNSNNISAGGNTNPELSTRNNPNNPRVPTSTIISGDKRNSENTDNRRKAETTMYYAIKKFKTEKDGIEQLHYTGISQSACREMALCRELDNNHLTKLVEIFLQKKSIYMVYEFAEHDLLQIIHFHSHPEKRMIPPRMIRSIMWQILDGVSYLHQNWVLHRDLKPANIMVTMDGVVKIGDLGLARKFSNMLQTMYTGDKVVVTIWYRAPELLLGARHYTPAIDLWAVGCIFAELIGLQPIFKGEEAKMDSKKTVPFQANQLQRILKILGTPTPKSWPHLQKYPEYEQLSKFPKYRDNLPGWFHSAGGRDKHALSLLYHLLNYNPIERIDAINALDHSYFTHGDMPVCENVFEGLNYKYPARRIHTNDNDILNLGLHKPKVPAKVVQPTMNNSTATLGGLGVNKRILAAAAAAAAAVSGNSSSQSSRNMEPMKKKRK.

A Protein kinase domain is found at 68-470; sequence YEIIGYIAAG…AINALDHSYF (403 aa). ATP is bound at residue 74 to 82; that stretch reads IAAGTYGKV. A disordered region spans residues 88-179; it reads RQSSKSSSST…RNSENTDNRR (92 aa). A compositionally biased stretch (low complexity) spans 90–101; it reads SSKSSSSTGSDS. Polar residues-rich tracts occupy residues 102-122 and 133-150; these read LAQDTKPTTEFSNTSSLQNAG and PNSNNISAGGNTNPELST. A compositionally biased stretch (basic and acidic residues) spans 167–179; the sequence is GDKRNSENTDNRR. K190 contacts ATP. D293 serves as the catalytic Proton acceptor. Over residues 546–556 the composition is skewed to low complexity; it reads AVSGNSSSQSS. The segment at 546–567 is disordered; it reads AVSGNSSSQSSRNMEPMKKKRK.

Belongs to the protein kinase superfamily. CMGC Ser/Thr protein kinase family. CDC2/CDKX subfamily. As to quaternary structure, component of the SRB8-11 complex, a regulatory module of the Mediator complex. The cofactor is Mg(2+).

It is found in the nucleus. It catalyses the reaction L-seryl-[protein] + ATP = O-phospho-L-seryl-[protein] + ADP + H(+). The catalysed reaction is L-threonyl-[protein] + ATP = O-phospho-L-threonyl-[protein] + ADP + H(+). The enzyme catalyses [DNA-directed RNA polymerase] + ATP = phospho-[DNA-directed RNA polymerase] + ADP + H(+). Its function is as follows. Component of the SRB8-11 complex. The SRB8-11 complex is a regulatory module of the Mediator complex which is itself involved in regulation of basal and activated RNA polymerase II-dependent transcription. The SRB8-11 complex may be involved in the transcriptional repression of a subset of genes regulated by Mediator. It may inhibit the association of the Mediator complex with RNA polymerase II to form the holoenzyme complex. The SRB8-11 complex phosphorylates the C-terminal domain (CTD) of the largest subunit of RNA polymerase II. In Candida glabrata (strain ATCC 2001 / BCRC 20586 / JCM 3761 / NBRC 0622 / NRRL Y-65 / CBS 138) (Yeast), this protein is Serine/threonine-protein kinase SSN3 (SSN3).